Consider the following 200-residue polypeptide: Nucleoside triphosphate pyrophosphatase (200 aa).

The active-site Proton acceptor is aspartate 79.

It belongs to the Maf family. A divalent metal cation serves as cofactor.

The protein resides in the cytoplasm. The catalysed reaction is a ribonucleoside 5'-triphosphate + H2O = a ribonucleoside 5'-phosphate + diphosphate + H(+). It carries out the reaction a 2'-deoxyribonucleoside 5'-triphosphate + H2O = a 2'-deoxyribonucleoside 5'-phosphate + diphosphate + H(+). Its function is as follows. Nucleoside triphosphate pyrophosphatase. May have a dual role in cell division arrest and in preventing the incorporation of modified nucleotides into cellular nucleic acids. This is Nucleoside triphosphate pyrophosphatase from Legionella pneumophila (strain Paris).